Reading from the N-terminus, the 370-residue chain is MRVKEQLLTLRAYVPGKNIEEVKREYGLSKIVKLASNENPFGCSARVTEALTSLASQYALYPDGYAFELRTKVAEHLGVKAEQLLFGSGLDEVIQMISRALLHEGTNVVMANPTFSQYHHHAVIEGAKVREVPLKDGIHDLDAMLEQVDDKTKIVWICNPNNPTGTYVEKQKLLSFLESVPKSALVIMDEAYYEYAGAEDYPQTLPLLEKYGNLMILRTFSKAYGLAAFRIGYAVGNEQLIGQLEVARLPFNTSTVAQSVALAALEDQAFLQECVKKNEEGLHQYYAFCKEYNVFYYPSQTNFIFLKLGIPGNEAFERLMKKGYIVRSGAAFGIHDGIRITVGLKEENDEIIELLKELVNEQVKKEETYS.

N6-(pyridoxal phosphate)lysine is present on lysine 222.

The protein belongs to the class-II pyridoxal-phosphate-dependent aminotransferase family. Histidinol-phosphate aminotransferase subfamily. Homodimer. The cofactor is pyridoxal 5'-phosphate.

The enzyme catalyses L-histidinol phosphate + 2-oxoglutarate = 3-(imidazol-4-yl)-2-oxopropyl phosphate + L-glutamate. The protein operates within amino-acid biosynthesis; L-histidine biosynthesis; L-histidine from 5-phospho-alpha-D-ribose 1-diphosphate: step 7/9. In Bacillus cereus (strain ATCC 10987 / NRS 248), this protein is Histidinol-phosphate aminotransferase 1.